Consider the following 882-residue polypeptide: MRTAEIREKFLSFFEGKGHLRLPSFSLIPEDDPSLLFTSAGMAPLKPYFLGAKPIFGGREWRRVTTCQECLRVGDIENVGRTSRHNTYFEMLGNFSFGDYFKKEAILWAWEFLTEHLRLDPGRLWVTVFEDDDEAYEIWRDLVGVPEERIGRFGEDENYWPGGAITHGPNGPSGPCSEIFYDRGPAYGTPDETGPNTGSGDRFVEIWNLVFTQYDRQGPIPGPGILKPLPQKNIDTGMGLYRVAAILQDVEDFYRTDTFFPIIQEVARMSGRPYEGKTSVSHRVIADHVRAVVAALSDGATFSNTGRGYVIRRLLRRALRHGYLLGLSDPFLHRLAPLVAELLGDFYPEMRENLPAVEKQIRLEEERFLETLEGGLKRLDALLSGLKPGEVLPGKEAFRLYDTYGFPLDLTVEIAAERGYGVDTEGFQKAMEEQQSRSRAAMAFEREIFKKGAQVLEELYAERGATEFLGYNALEAEAEVLALLAGDQSLLEAGPGTEVQVVLDKTPFYAEGGGQIGDFGLLEWPGGRARVETTRKTERGIFLHKARVEEGVLRVGERVRAVVDPRRRDTERNHTATHLLHAALRAVLGPHVRQAGSLVAPDRLRFDFTHPEPLKPEELERVELLVNRWIMADFPVTWRYMPLEEARKEGAMALFGEKYGEVVRVVRVEGSPLEGLESKELCGGCHVRRTGEIGAFLIRSEEAVSAGVRRIEAVTGEEAIRFARGSLNRLKALAERLEVGEAALEERLEKLLAELKEKEREVESLKARLVQAALGGGGGASLEEKGGLRWTVAELPGLDAKALRQAADDLVARGADVALVLSGGQAVLKLSPKAQGMGLEAGALFRALAEKAGGRGGGKGALAQGGGLDPRKAREALPGLLP.

Positions 574, 578, 682, and 686 each coordinate Zn(2+). The tract at residues 853–882 is disordered; the sequence is GGRGGGKGALAQGGGLDPRKAREALPGLLP. Gly residues predominate over residues 854–868; that stretch reads GRGGGKGALAQGGGL.

Belongs to the class-II aminoacyl-tRNA synthetase family. The cofactor is Zn(2+).

Its subcellular location is the cytoplasm. It carries out the reaction tRNA(Ala) + L-alanine + ATP = L-alanyl-tRNA(Ala) + AMP + diphosphate. In terms of biological role, catalyzes the attachment of alanine to tRNA(Ala) in a two-step reaction: alanine is first activated by ATP to form Ala-AMP and then transferred to the acceptor end of tRNA(Ala). Also edits incorrectly charged Ser-tRNA(Ala) and Gly-tRNA(Ala) via its editing domain. This chain is Alanine--tRNA ligase, found in Thermus thermophilus (strain ATCC BAA-163 / DSM 7039 / HB27).